The following is a 551-amino-acid chain: Trehalose-6-phosphate hydrolase (551 aa).

The Nucleophile role is filled by aspartate 200. Glutamate 251 acts as the Proton donor in catalysis.

The protein belongs to the glycosyl hydrolase 13 family.

It localises to the cytoplasm. The enzyme catalyses alpha,alpha-trehalose 6-phosphate + H2O = D-glucose 6-phosphate + D-glucose. Hydrolyzes trehalose-6-phosphate to glucose and glucose 6-phosphate. Can also very effectively hydrolyze p-nitrophenyl-alpha-D-glucopyranoside, but it does not recognize trehalose, sucrose, maltose, isomaltose, or maltodextrins. The chain is Trehalose-6-phosphate hydrolase (treC) from Escherichia coli (strain K12).